The chain runs to 82 residues: Putative membrane protein insertion efficiency factor (82 aa).

Residues Gly63 to His82 are disordered.

The protein belongs to the UPF0161 family.

It is found in the cell membrane. Its function is as follows. Could be involved in insertion of integral membrane proteins into the membrane. The polypeptide is Putative membrane protein insertion efficiency factor (Staphylococcus epidermidis (strain ATCC 35984 / DSM 28319 / BCRC 17069 / CCUG 31568 / BM 3577 / RP62A)).